Here is a 263-residue protein sequence, read N- to C-terminus: Endonuclease 8 (263 aa).

Residue Pro2 is the Schiff-base intermediate with DNA of the active site. Glu3 functions as the Proton donor in the catalytic mechanism. Lys53 (proton donor; for beta-elimination activity) is an active-site residue. Residues Gln70, Arg125, and Asn169 each contribute to the DNA site. The FPG-type zinc finger occupies 229 to 263; it reads KVFHRDGEPCERCGGIIEKTTLSSRPFYWCPGCQH. Arg253 (proton donor; for delta-elimination activity) is an active-site residue.

Belongs to the FPG family. The cofactor is Zn(2+).

The catalysed reaction is 2'-deoxyribonucleotide-(2'-deoxyribose 5'-phosphate)-2'-deoxyribonucleotide-DNA = a 3'-end 2'-deoxyribonucleotide-(2,3-dehydro-2,3-deoxyribose 5'-phosphate)-DNA + a 5'-end 5'-phospho-2'-deoxyribonucleoside-DNA + H(+). Involved in base excision repair of DNA damaged by oxidation or by mutagenic agents. Acts as a DNA glycosylase that recognizes and removes damaged bases. Has a preference for oxidized pyrimidines, such as thymine glycol, 5,6-dihydrouracil and 5,6-dihydrothymine. Has AP (apurinic/apyrimidinic) lyase activity and introduces nicks in the DNA strand. Cleaves the DNA backbone by beta-delta elimination to generate a single-strand break at the site of the removed base with both 3'- and 5'-phosphates. The chain is Endonuclease 8 from Escherichia coli O6:K15:H31 (strain 536 / UPEC).